Here is a 108-residue protein sequence, read N- to C-terminus: MSTLSEGPVARLLKEKLFAAFQPKHLEVECESHLHNVPKGAEKHFRVQVVSDEFEGKRVIERHRLVNTCLAKELATTVHALRIDAIPTSKWDGQKQEDSPTCRGGFGK.

The tract at residues 89-108 is disordered; sequence SKWDGQKQEDSPTCRGGFGK.

Belongs to the BolA/IbaG family.

In Caenorhabditis elegans, this protein is Putative bolA-like protein K11H12.1.